A 493-amino-acid polypeptide reads, in one-letter code: Cysteine sulfinic acid decarboxylase (493 aa).

Lys305 carries the post-translational modification N6-(pyridoxal phosphate)lysine.

It belongs to the group II decarboxylase family. Homodimer. Requires pyridoxal 5'-phosphate as cofactor. In terms of tissue distribution, expressed in liver and brain. Also expressed in both astrocytes and neurons, but lower levels are expressed in astrocytes.

The catalysed reaction is L-aspartate + H(+) = beta-alanine + CO2. It carries out the reaction 3-sulfino-L-alanine + H(+) = hypotaurine + CO2. The enzyme catalyses L-cysteate + H(+) = taurine + CO2. Its pathway is organosulfur biosynthesis; taurine biosynthesis; hypotaurine from L-cysteine: step 2/2. Catalyzes the decarboxylation of L-aspartate, 3-sulfino-L-alanine (cysteine sulfinic acid), and L-cysteate to beta-alanine, hypotaurine and taurine, respectively. The preferred substrate is 3-sulfino-L-alanine. Does not exhibit any decarboxylation activity toward glutamate. This is Cysteine sulfinic acid decarboxylase (CSAD) from Homo sapiens (Human).